We begin with the raw amino-acid sequence, 499 residues long: Probable dipeptidase B (499 aa).

Cys-26 is a catalytic residue.

It belongs to the peptidase C69 family.

It catalyses the reaction an L-aminoacyl-L-amino acid + H2O = 2 an L-alpha-amino acid. The polypeptide is Probable dipeptidase B (pepDB) (Streptococcus pyogenes serotype M6 (strain ATCC BAA-946 / MGAS10394)).